A 718-amino-acid chain; its full sequence is Quinohemoprotein alcohol dehydrogenase ADH-IIG (718 aa).

Residues 1-29 form the signal peptide; sequence MRQTGLASLPLKSLAVAVLLSLAGTPALA. Residue Glu92 coordinates pyrroloquinoline quinone. Residues Cys138 and Cys139 are joined by a disulfide bond. Pyrroloquinoline quinone contacts are provided by residues Arg144, Thr189, and 205 to 206; that span reads GA. Glu207 contributes to the Ca(2+) binding site. Thr264 is a binding site for pyrroloquinoline quinone. Asn284 and Asp329 together coordinate Ca(2+). Asp329 acts as the Proton acceptor in catalysis. Position 356 (Lys356) interacts with pyrroloquinoline quinone. Trp415 contacts substrate. Residues 419-420 and Ala571 contribute to the pyrroloquinoline quinone site; that span reads DW. The region spanning 622 to 699 is the Cytochrome c domain; it reads ASIEAGAKLY…QIHQYLIKRA (78 aa). Residues Cys635, Cys638, His639, and Met676 each contribute to the heme c site.

It belongs to the bacterial PQQ dehydrogenase family. In terms of assembly, monomer. The cofactor is pyrroloquinoline quinone. Requires Ca(2+) as cofactor. Heme c serves as cofactor.

It localises to the periplasm. It carries out the reaction 2 oxidized [azurin] + a primary alcohol = 2 reduced [azurin] + an aldehyde + 2 H(+). With respect to regulation, exhibits higher affinity for 1-butanol compared to 1,2-propanediol but inhibited by 10 mM 1-butanol. Functionally, catalyzes the dye-linked oxidation of primary alcohols to the corresponding aldehydes and the (subsequent) oxidation of the aldehydes to carboxylic acids. Active with primary alcohols, glycerol, 1,2-propanediol, 1,3-propanediol but not with methanol or sugar alcohols such as D-sorbitol. The sequence is that of Quinohemoprotein alcohol dehydrogenase ADH-IIG from Pseudomonas putida (Arthrobacter siderocapsulatus).